The following is a 389-amino-acid chain: Large envelope protein (389 aa).

At methionine 1 the chain carries N-acetylmethionine. Glycine 2 is lipidated: N-myristoyl glycine; by host. The tract at residues 2 to 108 (GTNLSVPNPL…PPLRDSHPQA (107 aa)) is pre-S1. Positions 2–163 (GTNLSVPNPL…SSRTGDPALN (162 aa)) are pre-S. Topologically, residues 2–170 (GTNLSVPNPL…ALNMENITSG (169 aa)) are virion surface; in external conformation. Over 2–242 (GTNLSVPNPL…PGYRWMCLRR (241 aa)) the chain is Intravirion; in internal conformation. The disordered stretch occupies residues 79 to 103 (TVPPTASTNRQSGRQPTPISPPLRD). Residues 84–95 (ASTNRQSGRQPT) are compositionally biased toward polar residues. Positions 109 to 163 (MQWNSTALHQALQDPRVRGLYFPAGGSSSGTLNPVPNTASHISSISSRTGDPALN) are pre-S2. The chain crosses the membrane as a helical span at residues 171 to 191 (FLGPLLVLQAGFFLLTRILTI). Over 192–242 (PQSLDSWWTSLNFLGGSPVCLGQNSQYPTSNHSPTSCPPICPGYRWMCLRR) the chain is Intravirion; in external conformation. A helical membrane pass occupies residues 243–263 (FIIFLFILLLCLIFLLVLLDY). Residues 264-337 (QGMLPVCPLI…WASVRFSWLS (74 aa)) are Virion surface-facing. Asparagine 309 is a glycosylation site (N-linked (GlcNAc...) asparagine; by host). A helical transmembrane segment spans residues 338-358 (LLVPFVQWFVGLSPTVWLSVI). Residues 359–364 (WMMWYW) are Intravirion-facing. The chain crosses the membrane as a helical span at residues 365–387 (GPSLYNIVSPFIPLLPIFFCLWV). Topologically, residues 388-389 (YI) are virion surface.

Belongs to the orthohepadnavirus major surface antigen family. As to quaternary structure, in its internal form (Li-HBsAg), interacts with the capsid protein and with the isoform S. Interacts with host chaperone CANX. In terms of assembly, associates with host chaperone CANX through its pre-S2 N glycan; this association may be essential for isoform M proper secretion. Interacts with isoform L. Interacts with the antigens of satellite virus HDV (HDVAgs); this interaction is required for encapsidation of HDV genomic RNA. Post-translationally, isoform M is N-terminally acetylated by host at a ratio of 90%, and N-glycosylated by host at the pre-S2 region. Myristoylated.

The protein resides in the virion membrane. The large envelope protein exists in two topological conformations, one which is termed 'external' or Le-HBsAg and the other 'internal' or Li-HBsAg. In its external conformation the protein attaches the virus to cell receptors and thereby initiating infection. This interaction determines the species specificity and liver tropism. This attachment induces virion internalization predominantly through caveolin-mediated endocytosis. The large envelope protein also assures fusion between virion membrane and endosomal membrane. In its internal conformation the protein plays a role in virion morphogenesis and mediates the contact with the nucleocapsid like a matrix protein. Its function is as follows. The middle envelope protein plays an important role in the budding of the virion. It is involved in the induction of budding in a nucleocapsid independent way. In this process the majority of envelope proteins bud to form subviral lipoprotein particles of 22 nm of diameter that do not contain a nucleocapsid. The chain is Large envelope protein from Hepatitis B virus genotype A1 subtype adw2 (isolate South Africa/84/2001) (HBV-A).